A 256-amino-acid chain; its full sequence is Ubiquinone/menaquinone biosynthesis C-methyltransferase UbiE (256 aa).

Residues 1-12 (MNDQRKGDHAEP) are compositionally biased toward basic and acidic residues. Positions 1 to 23 (MNDQRKGDHAEPTTHFGYQDVPE) are disordered. Residues threonine 79, aspartate 100, and 128–129 (DA) contribute to the S-adenosyl-L-methionine site.

Belongs to the class I-like SAM-binding methyltransferase superfamily. MenG/UbiE family.

The enzyme catalyses a 2-demethylmenaquinol + S-adenosyl-L-methionine = a menaquinol + S-adenosyl-L-homocysteine + H(+). It carries out the reaction a 2-methoxy-6-(all-trans-polyprenyl)benzene-1,4-diol + S-adenosyl-L-methionine = a 5-methoxy-2-methyl-3-(all-trans-polyprenyl)benzene-1,4-diol + S-adenosyl-L-homocysteine + H(+). The protein operates within quinol/quinone metabolism; menaquinone biosynthesis; menaquinol from 1,4-dihydroxy-2-naphthoate: step 2/2. It participates in cofactor biosynthesis; ubiquinone biosynthesis. Methyltransferase required for the conversion of demethylmenaquinol (DMKH2) to menaquinol (MKH2) and the conversion of 2-polyprenyl-6-methoxy-1,4-benzoquinol (DDMQH2) to 2-polyprenyl-3-methyl-6-methoxy-1,4-benzoquinol (DMQH2). This Pseudomonas putida (strain ATCC 700007 / DSM 6899 / JCM 31910 / BCRC 17059 / LMG 24140 / F1) protein is Ubiquinone/menaquinone biosynthesis C-methyltransferase UbiE.